The primary structure comprises 705 residues: Variediene synthase (705 aa).

Residues 9-331 (LNSTLSSVVE…RCPRYHPWLC (323 aa)) form a terpene cyclase region. A Mg(2+)-binding site is contributed by D100. Substrate is bound by residues D100, 186–189 (RIID), N230, 234–238 (SFDIE), and 325–326 (RY). The DDXXD 1 signature appears at 100 to 104 (DNVVE). The short motif at 230–238 (NDYFSFDIE) is the NSE/DTE element. The prenyltransferase stretch occupies residues 332–705 (KEAASLLHQD…VRLLIHRLKV (374 aa)). A compositionally biased stretch (basic and acidic residues) spans 349 to 366 (GRKPQALEEYRSRSHSES). The disordered stretch occupies residues 349 to 374 (GRKPQALEEYRSRSHSESDLSDASPT). Positions 424, 427, and 456 each coordinate isopentenyl diphosphate. The Mg(2+) site is built by D463 and D467. The DDXXD 2 signature appears at 463–467 (DDIED). R472 serves as a coordination point for dimethylallyl diphosphate. Isopentenyl diphosphate is bound at residue R473. K550, T551, Q589, N596, K605, and K615 together coordinate dimethylallyl diphosphate.

It in the N-terminal section; belongs to the terpene synthase family. This sequence in the C-terminal section; belongs to the FPP/GGPP synthase family. As to quaternary structure, hexamer. It depends on Mg(2+) as a cofactor.

It catalyses the reaction isopentenyl diphosphate + (2E,6E)-farnesyl diphosphate = (2E,6E,10E)-geranylgeranyl diphosphate + diphosphate. The catalysed reaction is isopentenyl diphosphate + (2E,6E,10E)-geranylgeranyl diphosphate = (2E,6E,10E,14E)-geranylfarnesyl diphosphate + diphosphate. It carries out the reaction (2E,6E,10E)-geranylgeranyl diphosphate = variediene + diphosphate. The enzyme catalyses (2E,6E,10E,14E)-geranylfarnesyl diphosphate = (R,2E)-alpha-cericerene + diphosphate. It functions in the pathway secondary metabolite biosynthesis; terpenoid biosynthesis. In terms of biological role, bifunctional terpene synthase that converts dimethylallyl diphosphate (DMAPP) and isopentenyl diphosphate (IPP) into variediene as a single product. The C-terminal prenyltransferase (PT) domain of EvVS catalyzes formation of geranylgeranyl pyrophosphate (GGPP), whereas the N-terminal terpene cyclase (TC) domain catalyzes the cyclization of GGPP to variediene. The PT domain can also synthesize geranylfarnesyl pyrophosphate (GFPP) from the C5 isoprene units in vitro, while the TC domain is able to cyclize GFPP to the sesterterpene (2E)-alpha-cericerene. The protein is Variediene synthase of Emericella variicolor (Aspergillus stellatus).